We begin with the raw amino-acid sequence, 1529 residues long: MSSQVISASRLYQIVASPTSDNDAKSRSINELKTHVKKDFVDIKQVPKYVEALSIAVDISDTGISTSSFSVLSHLVKRVSMQDSSGEVLKSQSYLVLPIIINRLGDIKASARISAKKALEAYWFSAPKEVEDSIIDIAFSHKNSKVINESIIWLDHIITNVNPHFKINLFLPHIVKLLRLNSDSDEVLIENIKTLFKDYYSLKHNRLYKFDLSKEFDTQKIPSNVHESIISQIGTSSSILMKQATPDIGLDHNFISAGTTRVTVNSMGRDKGTISSNSSTPASLSSSTMSRPKSRTNFHNYTKSISPSQEDEQITKPSVHNSAFNKYNTNQMSAPAKPVAMVNENSNEINSEISPEIEKIIAKTFTYKIDSSILPLDVKDVDDLCGTINELLPIFEGKETEFNWGMREKNIIKLRSIIRGNSSRLFTNELTSYLKESSESICKAVTSLRTTLSSHGCHFLKECAIILKEHFDPLVDSYVPHLMKLCSATKHIASSNANMALCAIFINVPYNYRLLHKILVSANEKNVQPRSYSGIWLQVVLVRFHDTSSFSYRGSNSISGLDTSIKILTKLLADPNPNVRQVAKDTYWCFWDKFPSEAESLLTRLDTNVVKAIERSKPRTITSRNQPSTLSSLTARKARPSIKESIIARNKELRKQKDQTSISRPSSRINSTSSPCPPDNDYLQKHDKPQFSTLDSGKFSRLGVAKRTPSTSSLSRVESNQDAITRKVSDSVSSNAKKHNDSQGINADAQIQNIETMKSTYSVDDNSSNRTNMEQTNKFESFDKQSDPILKFLSSNQKEFITEGINLLKYAIMGEEDLSSEVNGLLKKISVRNQDLLKPLFLSTDNLFKKTYQFFSFEDFFRVCCILIHTIDTRLVDLIVSIAGVDDIYESAIKLISYTTNLGNIIDDSDLTMQIIRFKSIIVRSIIEFLNQGLDKIPISDSYFSKLVTNLFELVSLVKSTGLYKSFCELLIKLYSINPTLFTSELQMIATSTREEVEYVVGIDDVLDLNRGHAINFTTQYELTRVVPGNNLRKMSPLKAPSDLTMVVPVEKELFEDDNIDIDSKIQSESANDTGFRTPPKLAGNHTSPIHSERSTIIETDGNISDNVEEYVNDAMDVDQNPSEEIVNGLKNDIEMHNDDNKVKEKTSNDMSDSLPLIDESDNIFVEIDSDSASRKPDLFTKFAQHDNSSELVENFAQVKITELSKQRLRNNDPIKKFIDKVDPLNKISLKNKPISIYEDVNFKGSPQKVKDYSYTELNWFNFQLAKLAMDKEDNQEIDYCIEDFKSLCDNLSSKKIEGKEFVSVLNYLQNIQISNAEFSRYFQSSGHSLIENSLWNFFDNHINLPVSKKLSGLILLKQLLINRLRVSLDRLWNLLVGLSSESSSSVDELSLAISEAFDEMLAGLFSSEIIFARILTTLENAVLERESFSLPFILECLSKVLSTNAVSLLIDEKLIMRIDNVLSGFMNDEEVEIRRCVISSYGKLLKASRISSSIETNEDIRSEYSVMDDILKKLSIPQKKLIEYYSQS.

Disordered stretches follow at residues 266 to 314 (SMGR…DEQI), 617 to 638 (KPRT…ARKA), 651 to 745 (KELR…SQGI), and 1070 to 1090 (SAND…TSPI). Over residues 273–290 (TISSNSSTPASLSSSTMS) the composition is skewed to low complexity. 2 stretches are compositionally biased toward polar residues: residues 295–308 (RTNF…ISPS) and 619–634 (RTIT…SSLT). Positions 660–674 (TSISRPSSRINSTSS) are enriched in low complexity. Polar residues predominate over residues 708–723 (TPSTSSLSRVESNQDA).

Belongs to the CLASP family. As to quaternary structure, interacts with microtubules.

It localises to the cytoplasm. The protein localises to the cytoskeleton. It is found in the nucleus. The protein resides in the spindle. Functionally, microtubule binding protein that promotes the stabilization of dynamic microtubules. Required for mitotic spindle formation. This is Protein STU1 (STU1) from Debaryomyces hansenii (strain ATCC 36239 / CBS 767 / BCRC 21394 / JCM 1990 / NBRC 0083 / IGC 2968) (Yeast).